The following is a 616-amino-acid chain: Pyrophosphate--fructose 6-phosphate 1-phosphotransferase subunit alpha (616 aa).

This sequence belongs to the phosphofructokinase type A (PFKA) family. PPi-dependent PFK group II subfamily. Clade 'Long' sub-subfamily. Tetramer of two alpha (regulatory) and two beta (catalytic) chains.

It is found in the cytoplasm. It functions in the pathway carbohydrate degradation; glycolysis; D-glyceraldehyde 3-phosphate and glycerone phosphate from D-glucose: step 3/4. Allosterically activated by fructose 2,6-bisphosphate. Functionally, regulatory subunit of pyrophosphate--fructose 6-phosphate 1-phosphotransferase. In Solanum tuberosum (Potato), this protein is Pyrophosphate--fructose 6-phosphate 1-phosphotransferase subunit alpha.